The sequence spans 309 residues: NAD kinase (309 aa).

The Proton acceptor role is filled by aspartate 89. Residues 89–90, 163–164, histidine 174, arginine 191, aspartate 193, and 204–209 each bind NAD(+); these read DG, NE, and TAYSLS.

Belongs to the NAD kinase family. A divalent metal cation serves as cofactor.

It is found in the cytoplasm. The enzyme catalyses NAD(+) + ATP = ADP + NADP(+) + H(+). Involved in the regulation of the intracellular balance of NAD and NADP, and is a key enzyme in the biosynthesis of NADP. Catalyzes specifically the phosphorylation on 2'-hydroxyl of the adenosine moiety of NAD to yield NADP. The sequence is that of NAD kinase from Shewanella denitrificans (strain OS217 / ATCC BAA-1090 / DSM 15013).